Reading from the N-terminus, the 348-residue chain is Putative agmatine deiminase (348 aa).

Residue cysteine 335 is the Amidino-cysteine intermediate of the active site.

It belongs to the agmatine deiminase family.

It carries out the reaction agmatine + H2O = N-carbamoylputrescine + NH4(+). The polypeptide is Putative agmatine deiminase (Legionella pneumophila subsp. pneumophila (strain Philadelphia 1 / ATCC 33152 / DSM 7513)).